Consider the following 466-residue polypeptide: Ribosomal protein uS12 methylthiotransferase RimO (466 aa).

One can recognise an MTTase N-terminal domain in the interval 31-141 (PTIGMVSLGC…VLDAVHGAVP (111 aa)). [4Fe-4S] cluster contacts are provided by Cys-40, Cys-76, Cys-105, Cys-172, Cys-176, and Cys-179. The 240-residue stretch at 158 to 397 (LTPRHYSYLK…MAKAQAISEA (240 aa)) folds into the Radical SAM core domain. Residues 400–466 (AARVGQVIEV…GEYDLWGRLR (67 aa)) form the TRAM domain.

Belongs to the methylthiotransferase family. RimO subfamily. The cofactor is [4Fe-4S] cluster.

It is found in the cytoplasm. It catalyses the reaction L-aspartate(89)-[ribosomal protein uS12]-hydrogen + (sulfur carrier)-SH + AH2 + 2 S-adenosyl-L-methionine = 3-methylsulfanyl-L-aspartate(89)-[ribosomal protein uS12]-hydrogen + (sulfur carrier)-H + 5'-deoxyadenosine + L-methionine + A + S-adenosyl-L-homocysteine + 2 H(+). Catalyzes the methylthiolation of an aspartic acid residue of ribosomal protein uS12. The polypeptide is Ribosomal protein uS12 methylthiotransferase RimO (Ruegeria pomeroyi (strain ATCC 700808 / DSM 15171 / DSS-3) (Silicibacter pomeroyi)).